A 964-amino-acid chain; its full sequence is uncharacterized protein (964 aa).

2 disordered regions span residues 1–31 (MDSE…SDCE) and 169–199 (EETY…DEIS). Positions 10-27 (HSICNSVSSGENYKSPES) are enriched in polar residues. A coiled-coil region spans residues 656 to 840 (EVMESLQVEI…LILNQTSMAK (185 aa)).

This is an uncharacterized protein from Caenorhabditis elegans.